The following is a 133-amino-acid chain: Large ribosomal subunit protein uL16c (133 aa).

It belongs to the universal ribosomal protein uL16 family. In terms of assembly, part of the 50S ribosomal subunit.

The protein localises to the plastid. The protein resides in the chloroplast. The sequence is that of Large ribosomal subunit protein uL16c from Liriodendron tulipifera (Tuliptree).